The chain runs to 92 residues: Small ribosomal subunit protein uS17 (92 aa).

This sequence belongs to the universal ribosomal protein uS17 family. Part of the 30S ribosomal subunit.

Functionally, one of the primary rRNA binding proteins, it binds specifically to the 5'-end of 16S ribosomal RNA. The polypeptide is Small ribosomal subunit protein uS17 (Corynebacterium glutamicum (strain ATCC 13032 / DSM 20300 / JCM 1318 / BCRC 11384 / CCUG 27702 / LMG 3730 / NBRC 12168 / NCIMB 10025 / NRRL B-2784 / 534)).